The following is a 206-amino-acid chain: Thymidylate kinase (206 aa).

ATP is bound at residue 16–23; that stretch reads GIDGTGKS.

This sequence belongs to the thymidylate kinase family.

It carries out the reaction dTMP + ATP = dTDP + ADP. Its function is as follows. Phosphorylation of dTMP to form dTDP in both de novo and salvage pathways of dTTP synthesis. The sequence is that of Thymidylate kinase from Akkermansia muciniphila (strain ATCC BAA-835 / DSM 22959 / JCM 33894 / BCRC 81048 / CCUG 64013 / CIP 107961 / Muc).